Here is a 384-residue protein sequence, read N- to C-terminus: FAD-dependent urate hydroxylase (384 aa).

FAD is bound by residues Gly-11, 30-31 (EA), Ser-43, and Val-125. Residues Asn-178, Arg-204, and 216-218 (YFF) contribute to the substrate site. Residues Asp-285 and 295 to 299 (GQGGC) each bind FAD.

Belongs to the FAD-dependent urate hydroxylase family. The cofactor is FAD.

It catalyses the reaction urate + NADH + O2 + H(+) = 5-hydroxyisourate + NAD(+) + H2O. It participates in purine metabolism; urate degradation. In terms of biological role, catalyzes the hydroxylation of uric acid to 5-hydroxyisourate. In Klebsiella pneumoniae, this protein is FAD-dependent urate hydroxylase (hpxO).